The chain runs to 363 residues: Flagellar P-ring protein (363 aa).

A signal peptide spans 1 to 20 (MKIKLILACALMVFSAASSA).

The protein belongs to the FlgI family. As to quaternary structure, the basal body constitutes a major portion of the flagellar organelle and consists of four rings (L,P,S, and M) mounted on a central rod.

The protein resides in the periplasm. It localises to the bacterial flagellum basal body. Assembles around the rod to form the L-ring and probably protects the motor/basal body from shearing forces during rotation. The polypeptide is Flagellar P-ring protein (Shewanella loihica (strain ATCC BAA-1088 / PV-4)).